The chain runs to 358 residues: Phospho-N-acetylmuramoyl-pentapeptide-transferase (358 aa).

Transmembrane regions (helical) follow at residues 13–47 (LFILNTFALIVTSYLFNNFIFTGVYILFFFISIFI), 81–101 (MGGIFMIIPFLILLLIITINL), 106–126 (LILLLLTVFGFFITGFLDDYL), 148–168 (ISIIFILLAYEKNLISPLITI), 171–191 (SWAINMNIFILPVAFLVLVGI), 201–221 (LDGLAAGCSGIVFYGLGTEIL), 228–248 (LFVFSILCFSMSGICLGFLKY), 255–275 (IFMGDTGSLSIGAILGSIALL), 278–298 (SIFTLSIFSGIFIIESLSVII), and 336–356 (IVENFWKINILLVILGIVLKI).

The protein belongs to the glycosyltransferase 4 family. MraY subfamily. Mg(2+) is required as a cofactor.

Its subcellular location is the cell inner membrane. It carries out the reaction UDP-N-acetyl-alpha-D-muramoyl-L-alanyl-gamma-D-glutamyl-meso-2,6-diaminopimeloyl-D-alanyl-D-alanine + di-trans,octa-cis-undecaprenyl phosphate = di-trans,octa-cis-undecaprenyl diphospho-N-acetyl-alpha-D-muramoyl-L-alanyl-D-glutamyl-meso-2,6-diaminopimeloyl-D-alanyl-D-alanine + UMP. It functions in the pathway cell wall biogenesis; peptidoglycan biosynthesis. Its function is as follows. Catalyzes the initial step of the lipid cycle reactions in the biosynthesis of the cell wall peptidoglycan: transfers peptidoglycan precursor phospho-MurNAc-pentapeptide from UDP-MurNAc-pentapeptide onto the lipid carrier undecaprenyl phosphate, yielding undecaprenyl-pyrophosphoryl-MurNAc-pentapeptide, known as lipid I. The sequence is that of Phospho-N-acetylmuramoyl-pentapeptide-transferase from Prochlorococcus marinus (strain MIT 9301).